Consider the following 60-residue polypeptide: Mastoparan-VT3 (60 aa).

Residues 1-27 (MKNTILILFTAFIALLGFFGMSAEALA) form the signal peptide. 4 AXPX repeats span residues 27–30 (ADPK), 31–34 (ADPL), 35–38 (AGPN), and 41–44 (ADPE). A propeptide spanning residues 28–45 (DPKADPLAGPNPDADPEA) is cleaved from the precursor. Residue leucine 59 is modified to Leucine amide.

The protein belongs to the MCD family. Mastoparan subfamily. In terms of tissue distribution, expressed by the venom gland.

The protein resides in the secreted. In terms of biological role, the synthetic peptide shows antimicrobial activities against Gram-negative bacteria (but not against all strains tested), Gram-positive bacteria (all strains tested) and the fungi C.albicans and C.parapsilosis. Exhibits moderate hemolytic activity (25% at 100 ug/ml) against washed human erythrocytes. This is Mastoparan-VT3 from Vespa tropica (Greater banded hornet).